We begin with the raw amino-acid sequence, 543 residues long: Cytochrome P450 monooxygenase 205 (543 aa).

Residues 9–29 (LISLGVAALAVAVWKAIVMVI) traverse the membrane as a helical segment. N-linked (GlcNAc...) asparagine glycans are attached at residues Asn-332 and Asn-434. Cys-479 contacts heme.

This sequence belongs to the cytochrome P450 family. Heme serves as cofactor.

It is found in the membrane. It participates in secondary metabolite biosynthesis. Cytochrome P450 monooxygenase that is able to use carbazole and phenanthrene as substrates for oxidation. This is Cytochrome P450 monooxygenase 205 from Postia placenta (strain ATCC 44394 / Madison 698-R) (Brown rot fungus).